The primary structure comprises 154 residues: Protein phosphatase 1 regulatory subunit 27 (154 aa).

2 ANK repeats span residues 63–92 and 96–125; these read SGLA…DIHQ and AGWT…DRDA.

Interacts with DYSF and PPP1CA.

Its function is as follows. Inhibits phosphatase activity of protein phosphatase 1 (PP1) complexes. The sequence is that of Protein phosphatase 1 regulatory subunit 27 (PPP1R27) from Homo sapiens (Human).